A 92-amino-acid chain; its full sequence is MAKRTKKVGITGKYGVRYGSSLRRQVKKLEIQQHARYDCSFCGKKTVKRGAAGIWTCSCCKKTVAGGAYTVSTAAAATVRSTIRRLREMVEA.

A C4-type zinc finger spans residues 39 to 60; it reads CSFCGKKTVKRGAAGIWTCSCC. Phosphoserine is present on Ser-40.

Belongs to the eukaryotic ribosomal protein eL43 family. Component of the large ribosomal subunit (LSU). Mature yeast ribosomes consist of a small (40S) and a large (60S) subunit. The 40S small subunit contains 1 molecule of ribosomal RNA (18S rRNA) and 33 different proteins (encoded by 57 genes). The large 60S subunit contains 3 rRNA molecules (25S, 5.8S and 5S rRNA) and 46 different proteins (encoded by 81 genes).

It is found in the cytoplasm. In terms of biological role, component of the ribosome, a large ribonucleoprotein complex responsible for the synthesis of proteins in the cell. The small ribosomal subunit (SSU) binds messenger RNAs (mRNAs) and translates the encoded message by selecting cognate aminoacyl-transfer RNA (tRNA) molecules. The large subunit (LSU) contains the ribosomal catalytic site termed the peptidyl transferase center (PTC), which catalyzes the formation of peptide bonds, thereby polymerizing the amino acids delivered by tRNAs into a polypeptide chain. The nascent polypeptides leave the ribosome through a tunnel in the LSU and interact with protein factors that function in enzymatic processing, targeting, and the membrane insertion of nascent chains at the exit of the ribosomal tunnel. This chain is Large ribosomal subunit protein eL43A, found in Saccharomyces cerevisiae (strain ATCC 204508 / S288c) (Baker's yeast).